The chain runs to 207 residues: ATP-dependent dethiobiotin synthetase BioD (207 aa).

11-16 (DVGKTF) lines the ATP pocket. T15 serves as a coordination point for Mg(2+). Residue K31 is part of the active site. S35 contacts substrate. ATP is bound by residues D42, 95-98 (ETSG), and 155-156 (NQ). Residues D42 and E95 each coordinate Mg(2+).

The protein belongs to the dethiobiotin synthetase family. Homodimer. Requires Mg(2+) as cofactor.

It localises to the cytoplasm. The catalysed reaction is (7R,8S)-7,8-diammoniononanoate + CO2 + ATP = (4R,5S)-dethiobiotin + ADP + phosphate + 3 H(+). The protein operates within cofactor biosynthesis; biotin biosynthesis; biotin from 7,8-diaminononanoate: step 1/2. Functionally, catalyzes a mechanistically unusual reaction, the ATP-dependent insertion of CO2 between the N7 and N8 nitrogen atoms of 7,8-diaminopelargonic acid (DAPA, also called 7,8-diammoniononanoate) to form a ureido ring. This Chlamydia abortus (strain DSM 27085 / S26/3) (Chlamydophila abortus) protein is ATP-dependent dethiobiotin synthetase BioD.